The sequence spans 1012 residues: Ankyrin repeat- and BTB/POZ domain-containing protein 3-B (1012 aa).

A helical membrane pass occupies residues 160–180 (ILSWTISVNCIAASLSALSMY). 3 ANK repeats span residues 511 to 540 (QGMT…DINS), 557 to 586 (RQAT…NVEG), and 595 to 624 (YTET…DPMI). The BTB domain maps to 831 to 897 (SDVTFLVEGK…LYCGGTDALH (67 aa)).

The protein resides in the membrane. The sequence is that of Ankyrin repeat- and BTB/POZ domain-containing protein 3-B (abtb3b) from Danio rerio (Zebrafish).